A 247-amino-acid chain; its full sequence is tRNA pseudouridine synthase A (247 aa).

The active-site Nucleophile is Asp-52. Tyr-113 is a substrate binding site.

Belongs to the tRNA pseudouridine synthase TruA family. As to quaternary structure, homodimer.

The enzyme catalyses uridine(38/39/40) in tRNA = pseudouridine(38/39/40) in tRNA. Functionally, formation of pseudouridine at positions 38, 39 and 40 in the anticodon stem and loop of transfer RNAs. This is tRNA pseudouridine synthase A from Rhizobium meliloti (strain 1021) (Ensifer meliloti).